Consider the following 430-residue polypeptide: Glutamyl-tRNA reductase (430 aa).

Residues Thr50–Arg53, Ser108, Glu113–Gln115, and Gln119 each bind substrate. Cys51 (nucleophile) is an active-site residue. Gly188–Ala193 contacts NADP(+).

This sequence belongs to the glutamyl-tRNA reductase family. As to quaternary structure, homodimer.

It carries out the reaction (S)-4-amino-5-oxopentanoate + tRNA(Glu) + NADP(+) = L-glutamyl-tRNA(Glu) + NADPH + H(+). Its pathway is porphyrin-containing compound metabolism; protoporphyrin-IX biosynthesis; 5-aminolevulinate from L-glutamyl-tRNA(Glu): step 1/2. Functionally, catalyzes the NADPH-dependent reduction of glutamyl-tRNA(Glu) to glutamate 1-semialdehyde (GSA). The polypeptide is Glutamyl-tRNA reductase (Lawsonia intracellularis (strain PHE/MN1-00)).